The primary structure comprises 879 residues: Alanine--tRNA ligase (879 aa).

The Zn(2+) site is built by histidine 566, histidine 570, cysteine 668, and histidine 672.

This sequence belongs to the class-II aminoacyl-tRNA synthetase family. Requires Zn(2+) as cofactor.

It localises to the cytoplasm. It catalyses the reaction tRNA(Ala) + L-alanine + ATP = L-alanyl-tRNA(Ala) + AMP + diphosphate. In terms of biological role, catalyzes the attachment of alanine to tRNA(Ala) in a two-step reaction: alanine is first activated by ATP to form Ala-AMP and then transferred to the acceptor end of tRNA(Ala). Also edits incorrectly charged Ser-tRNA(Ala) and Gly-tRNA(Ala) via its editing domain. The sequence is that of Alanine--tRNA ligase from Clostridium botulinum (strain Alaska E43 / Type E3).